Consider the following 357-residue polypeptide: Phenylalanine--tRNA ligase alpha subunit (357 aa).

E278 serves as a coordination point for Mg(2+).

The protein belongs to the class-II aminoacyl-tRNA synthetase family. Phe-tRNA synthetase alpha subunit type 1 subfamily. As to quaternary structure, tetramer of two alpha and two beta subunits. Requires Mg(2+) as cofactor.

It localises to the cytoplasm. The enzyme catalyses tRNA(Phe) + L-phenylalanine + ATP = L-phenylalanyl-tRNA(Phe) + AMP + diphosphate + H(+). The polypeptide is Phenylalanine--tRNA ligase alpha subunit (Albidiferax ferrireducens (strain ATCC BAA-621 / DSM 15236 / T118) (Rhodoferax ferrireducens)).